A 755-amino-acid polypeptide reads, in one-letter code: Leucine-rich repeat-containing protein 36 (755 aa).

LRR repeat units lie at residues 51-72 (SLRS…QYLC) and 73-94 (SLQE…SRLQ). The LRRCT domain maps to 107–146 (NPVVRKDTDYRLFAVYTLQTLEKLDDRAVRDSERRAAKLH). Disordered stretches follow at residues 354–374 (GKNY…TTSH) and 448–517 (LPPG…PPIS). Over residues 356–370 (NYREHSIKPSQDKKA) the composition is skewed to basic and acidic residues. Residues 498–510 (LSSDLGSLHGLSG) show a composition bias toward low complexity. Residues 601-671 (VESLKQKLVK…ELTQLKRLEE (71 aa)) are a coiled coil. The tract at residues 701 to 755 (YSGKSLLPPEKSHPLGRSSPFGKSTLSSSSPMVHDTGQYLIQSVSEADPEPSLWS) is disordered. Polar residues predominate over residues 721–731 (FGKSTLSSSSP).

This is Leucine-rich repeat-containing protein 36 (Lrrc36) from Mus musculus (Mouse).